A 275-amino-acid chain; its full sequence is tRNA pseudouridine synthase A (275 aa).

Catalysis depends on aspartate 56, which acts as the Nucleophile. Tyrosine 109 is a substrate binding site.

This sequence belongs to the tRNA pseudouridine synthase TruA family.

It carries out the reaction uridine(38/39/40) in tRNA = pseudouridine(38/39/40) in tRNA. Formation of pseudouridine at positions 38, 39 and 40 in the anticodon stem and loop of transfer RNAs. The sequence is that of tRNA pseudouridine synthase A from Methanothermobacter thermautotrophicus (strain ATCC 29096 / DSM 1053 / JCM 10044 / NBRC 100330 / Delta H) (Methanobacterium thermoautotrophicum).